We begin with the raw amino-acid sequence, 161 residues long: uncharacterized protein (161 aa).

This is an uncharacterized protein from Mycobacterium tuberculosis (strain CDC 1551 / Oshkosh).